The primary structure comprises 337 residues: Casein kinase I isoform alpha (337 aa).

Positions 17–285 constitute a Protein kinase domain; it reads YKLVRKIGSG…YLRQLFRILF (269 aa). ATP contacts are provided by residues 23–31 and Lys46; that span reads IGSGSFGDI. Asp136 serves as the catalytic Proton acceptor. Positions 309–325 are enriched in low complexity; it reads AASSSGQGQQAQTPTGK. The tract at residues 309-337 is disordered; that stretch reads AASSSGQGQQAQTPTGKQTDKSKSNMKGF.

It belongs to the protein kinase superfamily. CK1 Ser/Thr protein kinase family. Casein kinase I subfamily. In terms of processing, autophosphorylated.

It localises to the cytoplasm. It is found in the cytoskeleton. Its subcellular location is the microtubule organizing center. The protein resides in the centrosome. The protein localises to the chromosome. It localises to the centromere. It is found in the kinetochore. Its subcellular location is the nucleus speckle. The protein resides in the cilium basal body. The protein localises to the spindle. It catalyses the reaction L-seryl-[protein] + ATP = O-phospho-L-seryl-[protein] + ADP + H(+). It carries out the reaction L-threonyl-[protein] + ATP = O-phospho-L-threonyl-[protein] + ADP + H(+). Casein kinases are operationally defined by their preferential utilization of acidic proteins such as caseins as substrates. It can phosphorylate a large number of proteins. Participates in Wnt signaling. May play a role in segregating chromosomes during mitosis. May play a role in keratin cytoskeleton disassembly. The chain is Casein kinase I isoform alpha (CSNK1A1) from Gallus gallus (Chicken).